The following is a 510-amino-acid chain: 2,3-bisphosphoglycerate-independent phosphoglycerate mutase (510 aa).

Residues Asp14 and Ser64 each contribute to the Mn(2+) site. Ser64 serves as the catalytic Phosphoserine intermediate. Residues His125, 155–156 (RD), Arg187, Arg193, 259–262 (RADR), and Lys332 each bind substrate. Residues Asp399, His403, Asp440, His441, and His459 each coordinate Mn(2+).

It belongs to the BPG-independent phosphoglycerate mutase family. In terms of assembly, monomer. Requires Mn(2+) as cofactor.

It catalyses the reaction (2R)-2-phosphoglycerate = (2R)-3-phosphoglycerate. The protein operates within carbohydrate degradation; glycolysis; pyruvate from D-glyceraldehyde 3-phosphate: step 3/5. In terms of biological role, catalyzes the interconversion of 2-phosphoglycerate and 3-phosphoglycerate. The sequence is that of 2,3-bisphosphoglycerate-independent phosphoglycerate mutase from Pseudomonas savastanoi pv. phaseolicola (strain 1448A / Race 6) (Pseudomonas syringae pv. phaseolicola (strain 1448A / Race 6)).